The following is a 341-amino-acid chain: Probable GDP-mannose transporter 2 (341 aa).

The Cytoplasmic portion of the chain corresponds to Met1 to Ser11. The chain crosses the membrane as a helical span at residues Val12 to Val32. Residues Thr33–Asn46 lie on the Lumenal side of the membrane. A helical membrane pass occupies residues Phe47–Val67. At Gly68–Pro85 the chain is on the cytoplasmic side. Residues Ile86 to Val106 form a helical membrane-spanning segment. A topological domain (lumenal) is located at residue Pro107. The chain crosses the membrane as a helical span at residues Ile108–Phe128. Residues Gly129–Ser139 lie on the Cytoplasmic side of the membrane. The chain crosses the membrane as a helical span at residues Phe140–Ile160. Over Lys161–Thr176 the chain is Lumenal. A helical transmembrane segment spans residues Ile177–Phe197. Residues Val198–Asp214 are Cytoplasmic-facing. The helical transmembrane segment at Thr215 to Glu235 threads the bilayer. The Lumenal portion of the chain corresponds to Asp236–Leu251. N-linked (GlcNAc...) asparagine glycosylation is found at Asn241 and Asn245. The chain crosses the membrane as a helical span at residues Ala252 to Val272. Over Arg273–Thr278 the chain is Cytoplasmic. Residues Thr279 to Phe299 form a helical membrane-spanning segment. Residues Asp300–Lys303 are Lumenal-facing. A helical transmembrane segment spans residues Asn304–Ala324. The Cytoplasmic segment spans residues Lys325–Lys341.

This sequence belongs to the TPT transporter family. SLC35D subfamily.

It is found in the golgi apparatus membrane. It localises to the cytoplasmic vesicle membrane. The protein localises to the endoplasmic reticulum membrane. Its function is as follows. Involved in the import of GDP-mannose from the cytoplasm into the Golgi lumen. The sequence is that of Probable GDP-mannose transporter 2 (HVG1) from Saccharomyces cerevisiae (strain Lalvin EC1118 / Prise de mousse) (Baker's yeast).